A 195-amino-acid polypeptide reads, in one-letter code: ATP-dependent Clp protease proteolytic subunit (195 aa).

Ser98 (nucleophile) is an active-site residue. His123 is an active-site residue.

The protein belongs to the peptidase S14 family. In terms of assembly, fourteen ClpP subunits assemble into 2 heptameric rings which stack back to back to give a disk-like structure with a central cavity, resembling the structure of eukaryotic proteasomes.

Its subcellular location is the cytoplasm. The enzyme catalyses Hydrolysis of proteins to small peptides in the presence of ATP and magnesium. alpha-casein is the usual test substrate. In the absence of ATP, only oligopeptides shorter than five residues are hydrolyzed (such as succinyl-Leu-Tyr-|-NHMec, and Leu-Tyr-Leu-|-Tyr-Trp, in which cleavage of the -Tyr-|-Leu- and -Tyr-|-Trp bonds also occurs).. Cleaves peptides in various proteins in a process that requires ATP hydrolysis. Has a chymotrypsin-like activity. Plays a major role in the degradation of misfolded proteins. The polypeptide is ATP-dependent Clp protease proteolytic subunit (Alkaliphilus oremlandii (strain OhILAs) (Clostridium oremlandii (strain OhILAs))).